Consider the following 184-residue polypeptide: Adenine phosphoribosyltransferase (184 aa).

It belongs to the purine/pyrimidine phosphoribosyltransferase family. Homodimer.

It localises to the cytoplasm. The catalysed reaction is AMP + diphosphate = 5-phospho-alpha-D-ribose 1-diphosphate + adenine. It functions in the pathway purine metabolism; AMP biosynthesis via salvage pathway; AMP from adenine: step 1/1. In terms of biological role, catalyzes a salvage reaction resulting in the formation of AMP, that is energically less costly than de novo synthesis. The protein is Adenine phosphoribosyltransferase of Paracidovorax citrulli (strain AAC00-1) (Acidovorax citrulli).